A 402-amino-acid chain; its full sequence is mRNA-capping enzyme subunit alpha (402 aa).

The active-site N6-GMP-lysine intermediate is the lysine 66.

Belongs to the eukaryotic GTase family. In terms of assembly, heterodimer. The mRNA-capping enzyme is composed of two separate chains alpha and beta, respectively a mRNA guanylyltransferase and an mRNA 5'-triphosphate monophosphatase.

Its subcellular location is the nucleus. The catalysed reaction is a 5'-end diphospho-ribonucleoside in mRNA + GTP + H(+) = a 5'-end (5'-triphosphoguanosine)-ribonucleoside in mRNA + diphosphate. Second step of mRNA capping. Transfer of the GMP moiety of GTP to the 5'-end of RNA via an enzyme-GMP covalent reaction intermediate. The protein is mRNA-capping enzyme subunit alpha (rnp-2) of Neurospora crassa (strain ATCC 24698 / 74-OR23-1A / CBS 708.71 / DSM 1257 / FGSC 987).